The sequence spans 291 residues: ATP synthase gamma chain (291 aa).

Belongs to the ATPase gamma chain family. In terms of assembly, F-type ATPases have 2 components, CF(1) - the catalytic core - and CF(0) - the membrane proton channel. CF(1) has five subunits: alpha(3), beta(3), gamma(1), delta(1), epsilon(1). CF(0) has three main subunits: a, b and c.

It localises to the cell membrane. Produces ATP from ADP in the presence of a proton gradient across the membrane. The gamma chain is believed to be important in regulating ATPase activity and the flow of protons through the CF(0) complex. The sequence is that of ATP synthase gamma chain from Streptococcus equinus (Streptococcus bovis).